A 415-amino-acid polypeptide reads, in one-letter code: Serine hydroxymethyltransferase (415 aa).

Residues leucine 122 and 126–128 contribute to the (6S)-5,6,7,8-tetrahydrofolate site; that span reads GHL. An N6-(pyridoxal phosphate)lysine modification is found at lysine 230.

The protein belongs to the SHMT family. Homodimer. Requires pyridoxal 5'-phosphate as cofactor.

Its subcellular location is the cytoplasm. The enzyme catalyses (6R)-5,10-methylene-5,6,7,8-tetrahydrofolate + glycine + H2O = (6S)-5,6,7,8-tetrahydrofolate + L-serine. Its pathway is one-carbon metabolism; tetrahydrofolate interconversion. It participates in amino-acid biosynthesis; glycine biosynthesis; glycine from L-serine: step 1/1. Functionally, catalyzes the reversible interconversion of serine and glycine with tetrahydrofolate (THF) serving as the one-carbon carrier. This reaction serves as the major source of one-carbon groups required for the biosynthesis of purines, thymidylate, methionine, and other important biomolecules. Also exhibits THF-independent aldolase activity toward beta-hydroxyamino acids, producing glycine and aldehydes, via a retro-aldol mechanism. The chain is Serine hydroxymethyltransferase from Cupriavidus taiwanensis (strain DSM 17343 / BCRC 17206 / CCUG 44338 / CIP 107171 / LMG 19424 / R1) (Ralstonia taiwanensis (strain LMG 19424)).